The primary structure comprises 249 residues: GTP cyclohydrolase III (249 aa).

Belongs to the archaeal-type GTP cyclohydrolase family.

It carries out the reaction GTP + 3 H2O = 2-amino-5-formylamino-6-(5-phospho-D-ribosylamino)pyrimidin-4(3H)-one + 2 phosphate + 2 H(+). Functionally, catalyzes the formation of 2-amino-5-formylamino-6-ribofuranosylamino-4(3H)-pyrimidinone ribonucleotide monophosphate and inorganic phosphate from GTP. Also has an independent pyrophosphate phosphohydrolase activity. The polypeptide is GTP cyclohydrolase III (Methanothermobacter thermautotrophicus (strain ATCC 29096 / DSM 1053 / JCM 10044 / NBRC 100330 / Delta H) (Methanobacterium thermoautotrophicum)).